The sequence spans 272 residues: Nuclear transcription factor Y subunit A-1 (272 aa).

Disordered regions lie at residues 1-20 and 34-106; these read MQSK…HAVQ and SFGV…PALS. 2 stretches are compositionally biased toward polar residues: residues 46 to 61 and 82 to 92; these read IPSN…GSES and KDSQAATSSRS. A Subunit association domain (SAD) motif is present at residues 175–198; the sequence is YVNAKQYEGILRRRKARAKAELER. Residues 205 to 230 constitute a DNA-binding region (NFYA/HAP2-type); it reads KPYLHESRHKHAMRRARASGGRFAKK. A disordered region spans residues 206–272; the sequence is PYLHESRHKH…NETLNSSGAP (67 aa). Residues 211–221 are compositionally biased toward basic residues; the sequence is SRHKHAMRRAR. Residues 229–247 are compositionally biased toward basic and acidic residues; sequence KKSEVEAGEDAGGRDRERG. 2 stretches are compositionally biased toward polar residues: residues 248-257 and 263-272; these read SATNSSGSEQ and NETLNSSGAP.

The protein belongs to the NFYA/HAP2 subunit family. In terms of assembly, heterotrimeric transcription factor composed of three components, NF-YA, NF-YB and NF-YC. NF-YB and NF-YC must interact and dimerize for NF-YA association and DNA binding. In terms of tissue distribution, ubiquitous.

The protein localises to the nucleus. Functionally, stimulates the transcription of various genes by recognizing and binding to a CCAAT motif in promoters. The polypeptide is Nuclear transcription factor Y subunit A-1 (NFYA1) (Arabidopsis thaliana (Mouse-ear cress)).